We begin with the raw amino-acid sequence, 156 residues long: Small ribosomal subunit protein uS7c (156 aa).

The protein belongs to the universal ribosomal protein uS7 family. In terms of assembly, part of the 30S ribosomal subunit.

Its subcellular location is the plastid. The protein resides in the chloroplast. Its function is as follows. One of the primary rRNA binding proteins, it binds directly to 16S rRNA where it nucleates assembly of the head domain of the 30S subunit. The protein is Small ribosomal subunit protein uS7c (rps7) of Zamia furfuracea (Cardboard cycad).